The following is a 679-amino-acid chain: MGQEDQEVLIRGGKATSTSAESLNNNNEQPYEQSSINQGFCKNYGTLSPPSPALTADNLTYSWYNLDVFGAVHQPGSSWKQLVNRVKGVFCNERHIPAPRKHLLKNDSGVAYPGELLAVMGSSGAGKTTLLNASAFRSSKGVQISPSTIRMLNGHPVDAKEMQARCAYVQQDDLFIGSLTAREHLIFQAMVRMPRHMTQKQKVQRVDQVIQDLSLGKCQNTLIGVPGRVKGLSGGERKRLAFASEALTDPPLLICDEPTSGLDSFMAHSVVQVLKKLSQKGKTVILTIHQPSSELFELFDKILLMAEGRVAFLGTPGEAVDFFSYIGATCPTNYTPADFYVQVLAVVPGREVESRDRVAKICDNFAVGKVSREMEQNFQKLVKSNGFGKEDENEYTYKASWFMQFRAVLWRSWLSVLKEPLLVKVRLLQTTMVAVLIGLIFLGQQLTQVGVMNINGAIFLFLTNMTFQNSFATITVFTTELPVFMRETRSRLYRCDTYFLGKTIAELPLFLVVPFLFTAIAYPLIGLRPGVDHFFTALALVTLVANVSTSFGYLISCACSSTSMALSVGPPVIIPFLLFGGFFLNSGSVPVYFKWLSYLSWFRYANEGLLINQWADVKPGEITCTLSNTTCPSSGEVILETLNFSASDLPFDFIGLALLIVGFRISAYIALTMRARRKE.

The segment at 1-34 (MGQEDQEVLIRGGKATSTSAESLNNNNEQPYEQS) is disordered. Residues 15–34 (ATSTSAESLNNNNEQPYEQS) show a composition bias toward polar residues. In terms of domain architecture, ABC transporter spans 84–332 (NRVKGVFCNE…FSYIGATCPT (249 aa)). ATP is bound at residue 121–128 (GSSGAGKT). The next 5 helical transmembrane spans lie at 427-445 (LLQT…LGQQ), 457-477 (AIFL…ITVF), 507-525 (LPLF…YPLI), 534-555 (FFTA…GYLI), and 568-586 (VGPP…FLNS). N628 and N643 each carry an N-linked (GlcNAc...) asparagine glycan. Residues 651–670 (FDFIGLALLIVGFRISAYIA) form a helical membrane-spanning segment.

The protein belongs to the ABC transporter superfamily. ABCG family. Eye pigment precursor importer (TC 3.A.1.204) subfamily.

The protein resides in the membrane. May be part of a membrane-spanning permease system necessary for the transport of pigment precursors into pigment cells responsible for eye color. The chain is Protein white (W) from Ceratitis capitata (Mediterranean fruit fly).